A 224-amino-acid polypeptide reads, in one-letter code: Claudin-17 (224 aa).

At M1–Q7 the chain is on the cytoplasmic side. The helical transmembrane segment at I8–P28 threads the bilayer. Over Q29–R81 the chain is Extracellular. A helical membrane pass occupies residues A82–M102. The Cytoplasmic segment spans residues K103 to V124. The helical transmembrane segment at L125 to I145 threads the bilayer. Residues R146–A164 are Extracellular-facing. Residues L165 to F185 form a helical membrane-spanning segment. The Cytoplasmic portion of the chain corresponds to C186 to V224.

This sequence belongs to the claudin family. Cannot form tight junction strands on its own. Interacts with OCLN. In the kidney, expressed in the proximal tubule and in the Henle's loop. In the distal convoluted tubule, not expressed in all tubules. Not detected in the collecting duct (at protein level).

The protein localises to the cell junction. Its subcellular location is the tight junction. It is found in the basolateral cell membrane. It catalyses the reaction chloride(in) = chloride(out). It carries out the reaction hydrogencarbonate(in) = hydrogencarbonate(out). The enzyme catalyses bromide(in) = bromide(out). The catalysed reaction is iodide(out) = iodide(in). It catalyses the reaction fluoride(in) = fluoride(out). It carries out the reaction nitrate(in) = nitrate(out). The enzyme catalyses thiocyanate(in) = thiocyanate(out). Functionally, channel-forming tight junction protein with selectivity for anions, including chloride and hydrogencarbonate, and for solutes smaller than 9 Angstrom in diameter. In the kidney proximal tubule, may be involved in paracellular reabsorption of filtered anions. Does not affect water permeability. The polypeptide is Claudin-17 (CLDN17) (Homo sapiens (Human)).